Reading from the N-terminus, the 117-residue chain is Large ribosomal subunit protein bL19 (117 aa).

It belongs to the bacterial ribosomal protein bL19 family.

This protein is located at the 30S-50S ribosomal subunit interface and may play a role in the structure and function of the aminoacyl-tRNA binding site. This is Large ribosomal subunit protein bL19 from Alkalilimnicola ehrlichii (strain ATCC BAA-1101 / DSM 17681 / MLHE-1).